The sequence spans 196 residues: Imidazoleglycerol-phosphate dehydratase (196 aa).

Belongs to the imidazoleglycerol-phosphate dehydratase family.

The protein localises to the cytoplasm. The enzyme catalyses D-erythro-1-(imidazol-4-yl)glycerol 3-phosphate = 3-(imidazol-4-yl)-2-oxopropyl phosphate + H2O. Its pathway is amino-acid biosynthesis; L-histidine biosynthesis; L-histidine from 5-phospho-alpha-D-ribose 1-diphosphate: step 6/9. In Solidesulfovibrio magneticus (strain ATCC 700980 / DSM 13731 / RS-1) (Desulfovibrio magneticus), this protein is Imidazoleglycerol-phosphate dehydratase.